The chain runs to 300 residues: 4-hydroxy-tetrahydrodipicolinate synthase (300 aa).

Residue Thr45 coordinates pyruvate. The Proton donor/acceptor role is filled by Tyr140. Residue Lys169 is the Schiff-base intermediate with substrate of the active site. Val210 is a binding site for pyruvate.

This sequence belongs to the DapA family. As to quaternary structure, homotetramer; dimer of dimers.

The protein localises to the cytoplasm. It carries out the reaction L-aspartate 4-semialdehyde + pyruvate = (2S,4S)-4-hydroxy-2,3,4,5-tetrahydrodipicolinate + H2O + H(+). It functions in the pathway amino-acid biosynthesis; L-lysine biosynthesis via DAP pathway; (S)-tetrahydrodipicolinate from L-aspartate: step 3/4. Functionally, catalyzes the condensation of (S)-aspartate-beta-semialdehyde [(S)-ASA] and pyruvate to 4-hydroxy-tetrahydrodipicolinate (HTPA). The polypeptide is 4-hydroxy-tetrahydrodipicolinate synthase (Helicobacter acinonychis (strain Sheeba)).